The sequence spans 355 residues: MRVADFSFELPESLIAHYPQAERSGCRLLSLDGPTGDLTHGVFTDLLDKLNPGDLLVFNNTRVIPARLFGRKVSGGKLEVLVERVLDDHRVLAHVRASKAPKPGTELLLGDDESVKATMAARHDALFELHFDDSRDVLSILNDIGHMPLPPYIDRPDEDADRELYQTVYSQRPGAVAAPTAGLHFDEPMLAALREKGIEMAFVTLHVGAGTFQPVRVDTIEDHIMHAEYAEVPQDVVDAVLACKARGNRVIAVGTTSVRSLESAAQASQNAPIEPFFGDTKIFIYPGYHYRIIDALVTNFHLPESTLIMLVSAFAGYQNTMSAYRQAVAEQYRFFSYGDAMFITHNPMAEQEKVG.

The protein belongs to the QueA family. In terms of assembly, monomer.

Its subcellular location is the cytoplasm. The catalysed reaction is 7-aminomethyl-7-carbaguanosine(34) in tRNA + S-adenosyl-L-methionine = epoxyqueuosine(34) in tRNA + adenine + L-methionine + 2 H(+). Its pathway is tRNA modification; tRNA-queuosine biosynthesis. Transfers and isomerizes the ribose moiety from AdoMet to the 7-aminomethyl group of 7-deazaguanine (preQ1-tRNA) to give epoxyqueuosine (oQ-tRNA). The sequence is that of S-adenosylmethionine:tRNA ribosyltransferase-isomerase from Pectobacterium carotovorum subsp. carotovorum (strain PC1).